The following is a 388-amino-acid chain: Oligogalacturonide lyase (388 aa).

The protein localises to the periplasm. The catalysed reaction is 4-(4-deoxy-alpha-D-galact-4-enuronosyl)-D-galacturonate = 2 5-dehydro-4-deoxy-D-glucuronate. It participates in glycan metabolism; pectin degradation; 2-dehydro-3-deoxy-D-gluconate from pectin: step 3/5. Functionally, involved in degradation of pectin, which causes soft-rod disease in plants. The chain is Oligogalacturonide lyase (ogl) from Pectobacterium atrosepticum (strain SCRI 1043 / ATCC BAA-672) (Erwinia carotovora subsp. atroseptica).